The primary structure comprises 131 residues: Profilin-1 (131 aa).

Belongs to the profilin family. As to quaternary structure, occurs in many kinds of cells as a complex with monomeric actin in a 1:1 ratio.

It localises to the cytoplasm. The protein resides in the cytoskeleton. In terms of biological role, binds to actin and affects the structure of the cytoskeleton. At high concentrations, profilin prevents the polymerization of actin, whereas it enhances it at low concentrations. By binding to PIP2, it inhibits the formation of IP3 and DG. This chain is Profilin-1 (PRO1), found in Hordeum vulgare (Barley).